Reading from the N-terminus, the 152-residue chain is 3-dehydroquinate dehydratase (152 aa).

The active-site Proton acceptor is Tyr-26. Residues Asn-77, His-83, and Asp-90 each contribute to the substrate site. Residue His-103 is the Proton donor of the active site. Residues 104–105 and Arg-114 contribute to the substrate site; that span reads LS.

It belongs to the type-II 3-dehydroquinase family. As to quaternary structure, homododecamer.

The enzyme catalyses 3-dehydroquinate = 3-dehydroshikimate + H2O. It participates in metabolic intermediate biosynthesis; chorismate biosynthesis; chorismate from D-erythrose 4-phosphate and phosphoenolpyruvate: step 3/7. Its function is as follows. Catalyzes a trans-dehydration via an enolate intermediate. The polypeptide is 3-dehydroquinate dehydratase (aroQ) (Synechocystis sp. (strain ATCC 27184 / PCC 6803 / Kazusa)).